A 102-amino-acid polypeptide reads, in one-letter code: MHVKKGDKVVVITGKDKGKQGTVLEAYPKKSRVLVEGVNMVKKHAKPSQDNPQGGILNQEAPIHSSNVMLVDPKTGERTRVGYKEENGKKVRVAKKSGEIIK.

The interval His-44–Ser-65 is disordered.

This sequence belongs to the universal ribosomal protein uL24 family. As to quaternary structure, part of the 50S ribosomal subunit.

Functionally, one of two assembly initiator proteins, it binds directly to the 5'-end of the 23S rRNA, where it nucleates assembly of the 50S subunit. Its function is as follows. One of the proteins that surrounds the polypeptide exit tunnel on the outside of the subunit. The sequence is that of Large ribosomal subunit protein uL24 from Shouchella clausii (strain KSM-K16) (Alkalihalobacillus clausii).